The chain runs to 395 residues: Elongation factor Tu (395 aa).

A tr-type G domain is found at 10–204 (KPHVNIGTIG…IVDEYIPTPE (195 aa)). The tract at residues 19–26 (GHVDHGKT) is G1. 19–26 (GHVDHGKT) is a GTP binding site. T26 provides a ligand contact to Mg(2+). Residues 60–64 (GITIN) form a G2 region. The G3 stretch occupies residues 81-84 (DAPG). GTP-binding positions include 81–85 (DAPGH) and 136–139 (NKAD). The interval 136–139 (NKAD) is G4. Positions 174–176 (SAL) are G5.

This sequence belongs to the TRAFAC class translation factor GTPase superfamily. Classic translation factor GTPase family. EF-Tu/EF-1A subfamily. Monomer.

Its subcellular location is the cytoplasm. The catalysed reaction is GTP + H2O = GDP + phosphate + H(+). GTP hydrolase that promotes the GTP-dependent binding of aminoacyl-tRNA to the A-site of ribosomes during protein biosynthesis. This chain is Elongation factor Tu, found in Lactococcus lactis subsp. lactis (strain IL1403) (Streptococcus lactis).